The sequence spans 517 residues: MSQQVIIFDTTLRDGEQALQASLNVKEKLQIAFALERLGVDIMEVGFPISSPGDFESVHTIAQKIKNSLVCALARCIDNDIDVAAEALKVAKNFRIHIFLPTSNVHIQSKLKKNFDQIIDMTVHAIRYARKYTDDIEFSCEDAGRTNIDNLCRIVEIAIQSGASTINIPDTVGYTTPYQFGQIITSLYNRVPIIDKAIISVHCHDDLGMAVGNSISAIQAGARQIEGTINGIGERAGNTALEEIIMAIKVREDLLNVHTNVRCQEIYRASQVVSQLCNIPIPANKAIVGSNAFSHSAGIHQDGILKNRKNYEIMTPETIGLKDVKLNLTSRSGRAAVKHHMKTMGYQESDYDMDKLYDVFLELADKKGQVFDYDLEALAFINNQQEQSEFFRLKCFHVDSSSSEVAHASVKLYCGNNTYTHSSSGNGPIDAIYEALTHISKLSINLERYQLNAKGHGRNALGQVDIVVSYEGRNFHGVGLDTDVIKSSVKAMIHVLNNIWRAKQVIIQRKYIKKNNN.

Residues 5–267 (VIIFDTTLRD…HTNVRCQEIY (263 aa)) enclose the Pyruvate carboxyltransferase domain. Positions 14, 202, 204, and 238 each coordinate Mn(2+). Positions 392-517 (RLKCFHVDSS…QRKYIKKNNN (126 aa)) are regulatory domain.

Belongs to the alpha-IPM synthase/homocitrate synthase family. LeuA type 1 subfamily. Homodimer. Mn(2+) serves as cofactor.

The protein resides in the cytoplasm. It carries out the reaction 3-methyl-2-oxobutanoate + acetyl-CoA + H2O = (2S)-2-isopropylmalate + CoA + H(+). The protein operates within amino-acid biosynthesis; L-leucine biosynthesis; L-leucine from 3-methyl-2-oxobutanoate: step 1/4. In terms of biological role, catalyzes the condensation of the acetyl group of acetyl-CoA with 3-methyl-2-oxobutanoate (2-ketoisovalerate) to form 3-carboxy-3-hydroxy-4-methylpentanoate (2-isopropylmalate). This is 2-isopropylmalate synthase from Blochmanniella pennsylvanica (strain BPEN).